We begin with the raw amino-acid sequence, 342 residues long: Protein-glutamate methylesterase/protein-glutamine glutaminase 2 (342 aa).

The Response regulatory domain maps to 2–119 (NIGIVNDLPL…GGSADPSQPL (118 aa)). Position 53 is a 4-aspartylphosphate (Asp-53). The CheB-type methylesterase domain maps to 144–337 (PAPQGALPPL…DQLISLVQRN (194 aa)). Catalysis depends on residues Ser-159, His-186, and Asp-279.

This sequence belongs to the CheB family. In terms of processing, phosphorylated by CheA. Phosphorylation of the N-terminal regulatory domain activates the methylesterase activity.

The protein localises to the cytoplasm. The enzyme catalyses [protein]-L-glutamate 5-O-methyl ester + H2O = L-glutamyl-[protein] + methanol + H(+). The catalysed reaction is L-glutaminyl-[protein] + H2O = L-glutamyl-[protein] + NH4(+). Functionally, involved in chemotaxis. Part of a chemotaxis signal transduction system that modulates chemotaxis in response to various stimuli. Catalyzes the demethylation of specific methylglutamate residues introduced into the chemoreceptors (methyl-accepting chemotaxis proteins or MCP) by CheR. Also mediates the irreversible deamidation of specific glutamine residues to glutamic acid. This Burkholderia mallei (strain ATCC 23344) protein is Protein-glutamate methylesterase/protein-glutamine glutaminase 2.